A 246-amino-acid chain; its full sequence is Small ribosomal subunit protein uS2 (246 aa).

This sequence belongs to the universal ribosomal protein uS2 family. In terms of assembly, component of the small ribosomal subunit. Mature ribosomes consist of a small (40S) and a large (60S) subunit. The 40S subunit contains about 33 different proteins and 1 molecule of RNA (18S). The 60S subunit contains about 49 different proteins and 3 molecules of RNA (25S, 5.8S and 5S). Interacts with ribosomal protein S21.

Its subcellular location is the cytoplasm. Functionally, required for the assembly and/or stability of the 40S ribosomal subunit. Required for the processing of the 20S rRNA-precursor to mature 18S rRNA in a late step of the maturation of 40S ribosomal subunits. The polypeptide is Small ribosomal subunit protein uS2 (Leishmania infantum).